The following is a 319-amino-acid chain: Acetyl-coenzyme A carboxylase carboxyl transferase subunit alpha (319 aa).

The 262-residue stretch at 35-296 folds into the CoA carboxyltransferase C-terminal domain; the sequence is DLEKEIKQLE…KQRLLEQLKE (262 aa).

It belongs to the AccA family. In terms of assembly, acetyl-CoA carboxylase is a heterohexamer composed of biotin carboxyl carrier protein (AccB), biotin carboxylase (AccC) and two subunits each of ACCase subunit alpha (AccA) and ACCase subunit beta (AccD).

The protein localises to the cytoplasm. It catalyses the reaction N(6)-carboxybiotinyl-L-lysyl-[protein] + acetyl-CoA = N(6)-biotinyl-L-lysyl-[protein] + malonyl-CoA. The protein operates within lipid metabolism; malonyl-CoA biosynthesis; malonyl-CoA from acetyl-CoA: step 1/1. Functionally, component of the acetyl coenzyme A carboxylase (ACC) complex. First, biotin carboxylase catalyzes the carboxylation of biotin on its carrier protein (BCCP) and then the CO(2) group is transferred by the carboxyltransferase to acetyl-CoA to form malonyl-CoA. The chain is Acetyl-coenzyme A carboxylase carboxyl transferase subunit alpha from Aliivibrio fischeri (strain ATCC 700601 / ES114) (Vibrio fischeri).